The sequence spans 226 residues: UPF0177 protein YbdJ (226 aa).

A run of 5 helical transmembrane segments spans residues 16–36, 43–63, 81–101, 169–189, and 206–226; these read LLLLLVTVILYNGWTPHLGIF, FAFNYYGFVDILTFLVIIVIA, LLFILFFIVGGNIFIALAHHL, FAWVHTGFTYSFFLYLPISLV, and LHSSINLINTYLPNLLSFWVF.

It belongs to the UPF0177 family.

It localises to the cell membrane. The protein is UPF0177 protein YbdJ (ybdJ) of Lactococcus lactis subsp. lactis (strain IL1403) (Streptococcus lactis).